A 379-amino-acid polypeptide reads, in one-letter code: Chaperone protein DnaJ (379 aa).

One can recognise a J domain in the interval 5–70 (DYYEVLGVSR…QKRAAYDQYG (66 aa)). The CR-type zinc-finger motif lies at 134–212 (GVTKEIRIPT…CHGHGRVEKS (79 aa)). The Zn(2+) site is built by cysteine 147, cysteine 150, cysteine 164, cysteine 167, cysteine 186, cysteine 189, cysteine 200, and cysteine 203. 4 CXXCXGXG motif repeats span residues 147-154 (CDVCHGSG), 164-171 (CPTCHGAG), 186-193 (CPHCHGRG), and 200-207 (CNKCHGHG).

Belongs to the DnaJ family. Homodimer. Zn(2+) serves as cofactor.

It localises to the cytoplasm. In terms of biological role, participates actively in the response to hyperosmotic and heat shock by preventing the aggregation of stress-denatured proteins and by disaggregating proteins, also in an autonomous, DnaK-independent fashion. Unfolded proteins bind initially to DnaJ; upon interaction with the DnaJ-bound protein, DnaK hydrolyzes its bound ATP, resulting in the formation of a stable complex. GrpE releases ADP from DnaK; ATP binding to DnaK triggers the release of the substrate protein, thus completing the reaction cycle. Several rounds of ATP-dependent interactions between DnaJ, DnaK and GrpE are required for fully efficient folding. Also involved, together with DnaK and GrpE, in the DNA replication of plasmids through activation of initiation proteins. The protein is Chaperone protein DnaJ of Yersinia pestis bv. Antiqua (strain Antiqua).